Consider the following 304-residue polypeptide: MTAVFPAADSVIEAACAKVNLTLHVTGRRANGYHDLDSLVVFSGAHDTLIACPAEGLSLAMTGPTAALLDAEDDNIILRAARRLAERAGHRPDARLTLIKRLPVAAGIGGGSADGAATLRALSRLWKIALPQAEMLTLAAELGADVPVCLVGKAVTMAGIGDHLTPAPPLPEAWLLLVNPRRAVPTPQVFKARQGGFSAANPLTESPASAQALAEALKRRTNDLAEPARRIEPVIDEVLRTLAALPGCLLARMSGSGATCFGLFADQTSADFGMASLRETHGSWWASADRLIGDTARVPAALAV.

The active site involves K18. An ATP-binding site is contributed by 103–113; sequence PVAAGIGGGSA. Residue D145 is part of the active site.

This sequence belongs to the GHMP kinase family. IspE subfamily.

It carries out the reaction 4-CDP-2-C-methyl-D-erythritol + ATP = 4-CDP-2-C-methyl-D-erythritol 2-phosphate + ADP + H(+). The protein operates within isoprenoid biosynthesis; isopentenyl diphosphate biosynthesis via DXP pathway; isopentenyl diphosphate from 1-deoxy-D-xylulose 5-phosphate: step 3/6. Catalyzes the phosphorylation of the position 2 hydroxy group of 4-diphosphocytidyl-2C-methyl-D-erythritol. In Rhodospirillum rubrum (strain ATCC 11170 / ATH 1.1.1 / DSM 467 / LMG 4362 / NCIMB 8255 / S1), this protein is 4-diphosphocytidyl-2-C-methyl-D-erythritol kinase.